A 434-amino-acid polypeptide reads, in one-letter code: Histidinol dehydrogenase (434 aa).

NAD(+) is bound by residues Y130, Q188, and N211. Substrate is bound by residues S237, Q259, and H262. Zn(2+)-binding residues include Q259 and H262. Residues E326 and H327 each act as proton acceptor in the active site. Substrate is bound by residues H327, D360, E414, and H419. D360 is a Zn(2+) binding site. Zn(2+) is bound at residue H419.

Belongs to the histidinol dehydrogenase family. In terms of assembly, homodimer. It depends on Zn(2+) as a cofactor. Mn(2+) is required as a cofactor.

The catalysed reaction is L-histidinol + 2 NAD(+) + H2O = L-histidine + 2 NADH + 3 H(+). It participates in amino-acid biosynthesis; L-histidine biosynthesis; L-histidine from 5-phospho-alpha-D-ribose 1-diphosphate: step 9/9. Its activity is regulated as follows. Activity is lost when the metal is removed through urea denaturation or chelation, and can be regained by addition of metal. In terms of biological role, catalyzes the sequential NAD-dependent oxidations of L-histidinol to L-histidinaldehyde and then to L-histidine. In Salmonella typhimurium (strain LT2 / SGSC1412 / ATCC 700720), this protein is Histidinol dehydrogenase (hisD).